The following is a 496-amino-acid chain: Steroid 21-hydroxylase (496 aa).

Ser-109 lines the heme b pocket. Arg-232 provides a ligand contact to 17alpha-hydroxyprogesterone. Residue Arg-232 coordinates progesterone. Heme b contacts are provided by His-364, Arg-425, and Cys-427.

It belongs to the cytochrome P450 family. The cofactor is heme b.

It is found in the endoplasmic reticulum membrane. Its subcellular location is the microsome membrane. The enzyme catalyses progesterone + reduced [NADPH--hemoprotein reductase] + O2 = 21-hydroxyprogesterone + oxidized [NADPH--hemoprotein reductase] + H2O + H(+). It catalyses the reaction 17alpha-hydroxyprogesterone + reduced [NADPH--hemoprotein reductase] + O2 = 11-deoxycortisol + oxidized [NADPH--hemoprotein reductase] + H2O + H(+). Functionally, a cytochrome P450 monooxygenase that plays a major role in adrenal steroidogenesis. Catalyzes the hydroxylation at C-21 of progesterone and 17alpha-hydroxyprogesterone to respectively form 11-deoxycorticosterone and 11-deoxycortisol, intermediate metabolites in the biosynthetic pathway of mineralocorticoids and glucocorticoids. Mechanistically, uses molecular oxygen inserting one oxygen atom into a substrate, and reducing the second into a water molecule, with two electrons provided by NADPH via cytochrome P450 reductase (CPR; NADPH-ferrihemoprotein reductase). The polypeptide is Steroid 21-hydroxylase (CYP21) (Bos taurus (Bovine)).